Here is a 111-residue protein sequence, read N- to C-terminus: Cell cycle protein GpsB (111 aa).

A coiled-coil region spans residues 32-63 (LDDIMKDYDAYEAIIKELKGEIARLKAQAANS). A disordered region spans residues 59 to 80 (QAANSPKTTLPTEESNDVLRTE). Polar residues predominate over residues 60 to 71 (AANSPKTTLPTE).

This sequence belongs to the GpsB family. In terms of assembly, forms polymers through the coiled coil domains. Interacts with PBP1, MreC and EzrA.

Its subcellular location is the cytoplasm. Its function is as follows. Divisome component that associates with the complex late in its assembly, after the Z-ring is formed, and is dependent on DivIC and PBP2B for its recruitment to the divisome. Together with EzrA, is a key component of the system that regulates PBP1 localization during cell cycle progression. Its main role could be the removal of PBP1 from the cell pole after pole maturation is completed. Also contributes to the recruitment of PBP1 to the division complex. Not essential for septum formation. The polypeptide is Cell cycle protein GpsB (Streptococcus suis (strain 98HAH33)).